The chain runs to 195 residues: ATP-dependent Clp protease proteolytic subunit (195 aa).

The Nucleophile role is filled by serine 98. The active site involves histidine 123.

This sequence belongs to the peptidase S14 family. As to quaternary structure, fourteen ClpP subunits assemble into 2 heptameric rings which stack back to back to give a disk-like structure with a central cavity, resembling the structure of eukaryotic proteasomes.

It localises to the cytoplasm. It carries out the reaction Hydrolysis of proteins to small peptides in the presence of ATP and magnesium. alpha-casein is the usual test substrate. In the absence of ATP, only oligopeptides shorter than five residues are hydrolyzed (such as succinyl-Leu-Tyr-|-NHMec, and Leu-Tyr-Leu-|-Tyr-Trp, in which cleavage of the -Tyr-|-Leu- and -Tyr-|-Trp bonds also occurs).. Its function is as follows. Cleaves peptides in various proteins in a process that requires ATP hydrolysis. Has a chymotrypsin-like activity. Plays a major role in the degradation of misfolded proteins. The sequence is that of ATP-dependent Clp protease proteolytic subunit from Thermodesulfovibrio yellowstonii (strain ATCC 51303 / DSM 11347 / YP87).